The chain runs to 360 residues: Vitopine synthase (360 aa).

It belongs to the lysopine/nopaline/octopine/opine/vitopine dehydrogenases family.

The polypeptide is Vitopine synthase (vis) (Allorhizobium ampelinum (strain ATCC BAA-846 / DSM 112012 / S4) (Agrobacterium vitis (strain S4))).